Reading from the N-terminus, the 183-residue chain is Ras-related protein Rap-2a (183 aa).

10-17 is a binding site for GTP; sequence GSGGVGKS. The Effector region motif lies at 32 to 40; it reads YDPTIEDFY. GTP-binding positions include 57–61 and 116–119; these read DTAGT and NKVD. 2 S-palmitoyl cysteine lipidation sites follow: cysteine 176 and cysteine 177. Position 180 is a cysteine methyl ester (cysteine 180). A lipid anchor (S-farnesyl cysteine) is attached at cysteine 180. A propeptide spans 181–183 (removed in mature form); that stretch reads NIQ.

This sequence belongs to the small GTPase superfamily. Ras family. As to quaternary structure, interacts with PLCE1. Interacts with ARHGAP29, SGSM1, SGSM2 and SGSM3. Interacts (GTP-bound form preferentially) with MAP4K4. Interacts with MINK1. Interacts with cytoskeletal actin. Interacts (GTP-bound form) with RUNDC3A. Interacts (GTP-bound form preferentially) with TNIK (via the CNH domain); the interaction is direct and recruits RAP2A to the E3 ubiquitin ligase NEDD4. Interacts with RGS14; the interaction is GTP-dependent. Post-translationally, ubiquitinated; undergoes 'Lys-63' monoubiquitination and diubiquitination by NEDD4. Multiple lysine residues are probably modified. Ubiquitination requires TNIK, prevents interaction with effectors and inactivates RAP2A. Ubiquitination by the ECS(RAB40B) complex leads to RAP2A localization to lamellipodia plasma membrane, activation, and regulation of sorting at early endosomes for recycling to the lamellipodia plasma membrane. In terms of processing, palmitoylated. Palmitoylation is required for association with recycling endosome membranes and activation of TNIK. Expressed in granular layer of the cerebellum, forebrain, striatum, layer V of the cortex, olfactory cortex, tubercules, subthalamic and hippocampus, particularly in the CA2 region, to a lesser extent in the CA1 region and the external layer of the dentate gyrus. Expressed in neurons.

It is found in the midbody. It localises to the cell projection. The protein resides in the lamellipodium membrane. Its subcellular location is the golgi apparatus. The protein localises to the recycling endosome membrane. It is found in the lysosome. It carries out the reaction GTP + H2O = GDP + phosphate + H(+). With respect to regulation, activated by the guanine nucleotide-exchange factors RAPGEF3 and RAPGEF4 in a cAMP-dependent manner. Nucleotide exchange is also specifically stimulated by RAPGEF5, RASGEF1A and RASGEF1B. In terms of biological role, small GTP-binding protein which cycles between a GDP-bound inactive and a GTP-bound active form. In its active form interacts with and regulates several effectors including MAP4K4, MINK1 and TNIK. Part of a signaling complex composed of NEDD4, RAP2A and TNIK which regulates neuronal dendrite extension and arborization during development. More generally, it is part of several signaling cascades and may regulate cytoskeletal rearrangements, cell migration, cell adhesion and cell spreading. This chain is Ras-related protein Rap-2a, found in Mus musculus (Mouse).